The following is a 497-amino-acid chain: Glycerol kinase (497 aa).

Thr-13 contacts ADP. Thr-13, Thr-14, and Ser-15 together coordinate ATP. Thr-13 is a binding site for sn-glycerol 3-phosphate. Position 17 (Arg-17) interacts with ADP. Sn-glycerol 3-phosphate is bound by residues Arg-83, Glu-84, and Tyr-135. Positions 83, 84, and 135 each coordinate glycerol. His-231 bears the Phosphohistidine; by HPr mark. Position 245 (Asp-245) interacts with sn-glycerol 3-phosphate. Positions 245 and 246 each coordinate glycerol. 2 residues coordinate ADP: Thr-267 and Gly-310. The ATP site is built by Thr-267, Gly-310, Gln-314, and Gly-411. ADP contacts are provided by Gly-411 and Asn-415.

This sequence belongs to the FGGY kinase family. Homotetramer and homodimer (in equilibrium). Post-translationally, the phosphoenolpyruvate-dependent sugar phosphotransferase system (PTS), including enzyme I, and histidine-containing protein (HPr) are required for the phosphorylation, which leads to the activation of the enzyme.

The enzyme catalyses glycerol + ATP = sn-glycerol 3-phosphate + ADP + H(+). The protein operates within polyol metabolism; glycerol degradation via glycerol kinase pathway; sn-glycerol 3-phosphate from glycerol: step 1/1. With respect to regulation, activated by phosphorylation and inhibited by fructose 1,6-bisphosphate (FBP). Key enzyme in the regulation of glycerol uptake and metabolism. Catalyzes the phosphorylation of glycerol to yield sn-glycerol 3-phosphate. In Listeria monocytogenes serotype 4a (strain HCC23), this protein is Glycerol kinase.